Reading from the N-terminus, the 299-residue chain is Muscleblind-like protein (299 aa).

C3H1-type zinc fingers lie at residues 38-66 and 72-100; these read WLQVEVCREFLRGQCARSDQECKFAHPPP and QGRVTACYDSIKGRCTRENPKCKYLHPPQ.

This sequence belongs to the muscleblind family.

It is found in the nucleus. Binds to RNA with repeat sequences CUG and CCUG. The sequence is that of Muscleblind-like protein from Caenorhabditis briggsae.